A 72-amino-acid polypeptide reads, in one-letter code: Translation initiation factor IF-1 (72 aa).

The region spanning 1–72 (MPKDDSIEVE…TRGRITYRAK (72 aa)) is the S1-like domain.

This sequence belongs to the IF-1 family. As to quaternary structure, component of the 30S ribosomal translation pre-initiation complex which assembles on the 30S ribosome in the order IF-2 and IF-3, IF-1 and N-formylmethionyl-tRNA(fMet); mRNA recruitment can occur at any time during PIC assembly.

The protein localises to the cytoplasm. Functionally, one of the essential components for the initiation of protein synthesis. Stabilizes the binding of IF-2 and IF-3 on the 30S subunit to which N-formylmethionyl-tRNA(fMet) subsequently binds. Helps modulate mRNA selection, yielding the 30S pre-initiation complex (PIC). Upon addition of the 50S ribosomal subunit IF-1, IF-2 and IF-3 are released leaving the mature 70S translation initiation complex. This is Translation initiation factor IF-1 from Myxococcus xanthus (strain DK1622).